The sequence spans 503 residues: MFWADAAVKDLIGEQRISTGISPSGPIHVGNMREILTGDILYKAVIKRGLKSDFIYLCDDMDPLRKVYPFLDQSYSKYVGFPLKNIPSPDGVGVYSDHFLNPFIEVMRKTGIPARVIKTSDLYGNGILADAIDTVMERRSEIKDILEKITGRMIEGDFYPYEPLCEKCGRINSTSVISYKYPYAEYTCKCGHHGFADIRRAEGKMPWRIEWPAKWYALKVSIEPFGKDHGAPGGSYDTGKRIAREIFGIEPPLPLVYERIMLKGKGAMHSSTGLAIPASEIIDVMPPELLRFLIARVNPSRHIDFDPGLGLLNLFDEFERYLNKYREGDIDGDSKAIIEYSLIEKEKLSYPIDFRHLITLIQIYQKKEDILRAAMASTKDQLDESALYDEIKYAKNWLERYAPDNVKFKLLAIDEKAELSDQDRAILSKFLEVSNSMAWDSNEIHSTVHNVAKDLGIGPDAAFSTFYKVFIGKERGPRLGYFLFNLGKDFTIARIKSVLGGNS.

A 'HIGH' region motif is present at residues 23–31 (PSGPIHVGN). A 'KMSKS' region motif is present at residues 267–271 (AMHSS).

This sequence belongs to the class-I aminoacyl-tRNA synthetase family.

The protein resides in the cytoplasm. The enzyme catalyses tRNA(Lys) + L-lysine + ATP = L-lysyl-tRNA(Lys) + AMP + diphosphate. The protein is Lysine--tRNA ligase of Thermoplasma volcanium (strain ATCC 51530 / DSM 4299 / JCM 9571 / NBRC 15438 / GSS1).